The chain runs to 454 residues: tRNA-2-methylthio-N(6)-dimethylallyladenosine synthase (454 aa).

In terms of domain architecture, MTTase N-terminal spans 11–128 (KKLYIQTHGC…LPEMIETPRE (118 aa)). Residues Cys-20, Cys-57, Cys-91, Cys-165, Cys-169, and Cys-172 each coordinate [4Fe-4S] cluster. The region spanning 151–382 (EADGATAFVS…QTRIIQQAQE (232 aa)) is the Radical SAM core domain. The TRAM domain maps to 385–449 (RRMVGNTERV…PNSLRGVLLG (65 aa)).

The protein belongs to the methylthiotransferase family. MiaB subfamily. As to quaternary structure, monomer. Requires [4Fe-4S] cluster as cofactor.

It is found in the cytoplasm. The enzyme catalyses N(6)-dimethylallyladenosine(37) in tRNA + (sulfur carrier)-SH + AH2 + 2 S-adenosyl-L-methionine = 2-methylsulfanyl-N(6)-dimethylallyladenosine(37) in tRNA + (sulfur carrier)-H + 5'-deoxyadenosine + L-methionine + A + S-adenosyl-L-homocysteine + 2 H(+). Its function is as follows. Catalyzes the methylthiolation of N6-(dimethylallyl)adenosine (i(6)A), leading to the formation of 2-methylthio-N6-(dimethylallyl)adenosine (ms(2)i(6)A) at position 37 in tRNAs that read codons beginning with uridine. The polypeptide is tRNA-2-methylthio-N(6)-dimethylallyladenosine synthase (Saccharophagus degradans (strain 2-40 / ATCC 43961 / DSM 17024)).